The sequence spans 78 residues: Acyl carrier protein (78 aa).

Residues 2–77 (STIEERVKKI…AAIDYINGHQ (76 aa)) form the Carrier domain. Serine 37 carries the O-(pantetheine 4'-phosphoryl)serine modification.

Belongs to the acyl carrier protein (ACP) family. 4'-phosphopantetheine is transferred from CoA to a specific serine of apo-ACP by AcpS. This modification is essential for activity because fatty acids are bound in thioester linkage to the sulfhydryl of the prosthetic group.

The protein resides in the cytoplasm. The protein operates within lipid metabolism; fatty acid biosynthesis. In terms of biological role, carrier of the growing fatty acid chain in fatty acid biosynthesis. This chain is Acyl carrier protein, found in Erwinia tasmaniensis (strain DSM 17950 / CFBP 7177 / CIP 109463 / NCPPB 4357 / Et1/99).